A 311-amino-acid chain; its full sequence is Prohibitin-2 (311 aa).

A helical membrane pass occupies residues 39–57 (GAGMGLAGLVLLGGAAFVA). The AIM motif lies at 141–144 (YRTL).

The protein belongs to the prohibitin family. As to quaternary structure, the mitochondrial prohibitin complex consists of two subunits (PHB1 and PHB2). The subunits assemble into a membrane-associated ring-shaped supercomplex of approximately 1 mDa. Interacts with ATG24/SNX4; the interaction is direct and plays a role in mitophagy.

The protein resides in the mitochondrion inner membrane. In terms of biological role, prohibitin probably acts as a holdase/unfoldase for the stabilization of newly synthesized mitochondrial proteins. Involved in mitophagy. Required for the switch to necrotrophic growth. This Colletotrichum higginsianum (strain IMI 349063) (Crucifer anthracnose fungus) protein is Prohibitin-2.